The chain runs to 628 residues: Patulin synthase (628 aa).

An N-terminal signal peptide occupies residues methionine 1–alanine 19. An N-linked (GlcNAc...) asparagine glycan is attached at asparagine 49. Residues threonine 61 to alanine 62 and glutamate 82 to alanine 83 each bind FAD. N-linked (GlcNAc...) asparagine glycosylation is present at asparagine 93. An FAD-binding site is contributed by asparagine 148–alanine 151. Asparagine 198, asparagine 261, asparagine 283, asparagine 429, asparagine 486, and asparagine 526 each carry an N-linked (GlcNAc...) asparagine glycan. The active-site Proton acceptor is the histidine 564. Asparagine 575 is a glycosylation site (N-linked (GlcNAc...) asparagine). Residues alanine 598 and proline 609 to glutamine 610 each bind FAD.

The protein belongs to the GMC oxidoreductase family. The cofactor is FAD.

It localises to the cytoplasm. It is found in the cell cortex. The protein resides in the vacuole. The protein localises to the secreted. Its subcellular location is the cell wall. The enzyme catalyses (E)-ascladiol + A = patulin + AH2. Its pathway is mycotoxin biosynthesis; patulin biosynthesis. Patulin synthase; part of the gene cluster that mediates the biosynthesis of patulin, an acetate-derived tetraketide mycotoxin produced by several fungal species that shows antimicrobial properties against several bacteria. PatE catalyzes the last step of the pathway which is the conversion of E-ascladiol to patulin. The pathway begins with the synthesis of 6-methylsalicylic acid by the polyketide synthase (PKS) patK via condensation of acetate and malonate units. The 6-methylsalicylic acid decarboxylase patG then catalyzes the decarboxylation of 6-methylsalicylic acid to yield m-cresol (also known as 3-methylphenol). These first reactions occur in the cytosol. The intermediate m-cresol is then transported into the endoplasmic reticulum where the cytochrome P450 monooxygenase patH converts it to m-hydroxybenzyl alcohol, which is further converted to gentisyl alcohol by the cytochrome P450 monooxygenase patI. The oxidoreductases patJ and patO further convert gentisyl alcohol to isoepoxydon in the vacuole. PatN catalyzes then the transformation of isoepoxydon into phyllostine. The cluster protein patF is responsible for the conversion from phyllostine to neopatulin whereas the alcohol dehydrogenase patD converts neopatulin to E-ascladiol. The steps between isoepoxydon and E-ascladiol occur in the cytosol, and E-ascladiol is probably secreted to the extracellular space by one of the cluster-specific transporters patC or patM. Finally, the secreted patulin synthase patE catalyzes the conversion of E-ascladiol to patulin. In Penicillium expansum (Blue mold rot fungus), this protein is Patulin synthase.